A 76-amino-acid chain; its full sequence is Exodeoxyribonuclease 7 small subunit (76 aa).

This sequence belongs to the XseB family. Heterooligomer composed of large and small subunits.

It localises to the cytoplasm. The catalysed reaction is Exonucleolytic cleavage in either 5'- to 3'- or 3'- to 5'-direction to yield nucleoside 5'-phosphates.. Its function is as follows. Bidirectionally degrades single-stranded DNA into large acid-insoluble oligonucleotides, which are then degraded further into small acid-soluble oligonucleotides. The protein is Exodeoxyribonuclease 7 small subunit of Bacillus cereus (strain G9842).